The following is a 497-amino-acid chain: tRNA (adenine(58)-N(1))-methyltransferase non-catalytic subunit TRM6 (497 aa).

The disordered stretch occupies residues 81–103 (LEEPASETKEAGTDNRNIVDDGK). The tract at residues 95-105 (NRNIVDDGKSQ) is substrate. Threonine 108 bears the Phosphothreonine mark. Substrate regions lie at residues 146 to 155 (KYIKKKKKKY) and 176 to 183 (REPGKINH). The disordered stretch occupies residues 275–354 (MLSSEPKDST…EKQRRQEEQR (80 aa)). The span at 289–307 (SNGELEEKEIAEQADEDNI) shows a compositional bias: acidic residues. The segment covering 328–354 (PENKEPKEKRSKRDYIQEKQRRQEEQR) has biased composition (basic and acidic residues). 2 residues coordinate substrate: arginine 349 and arginine 377. 2 substrate regions span residues 415-423 (RERGGVINL) and 434-441 (QVLPDRSH). The tract at residues 474-497 (TGALDPHKAEEPAAKKQKCMESAS) is disordered. Residues 478–487 (DPHKAEEPAA) show a composition bias toward basic and acidic residues.

This sequence belongs to the TRM6/GCD10 family. In terms of assembly, heterotetramer; composed of two copies of TRMT6 and two copies of TRMT61A.

Its subcellular location is the nucleus. Substrate-binding subunit of tRNA (adenine-N(1)-)-methyltransferase, which catalyzes the formation of N(1)-methyladenine at position 58 (m1A58) in initiator methionyl-tRNA. Together with the TRMT61A catalytic subunit, part of a mRNA N(1)-methyltransferase complex that mediates methylation of adenosine residues at the N(1) position of a small subset of mRNAs: N(1) methylation takes place in tRNA T-loop-like structures of mRNAs and is only present at low stoichiometries. This is tRNA (adenine(58)-N(1))-methyltransferase non-catalytic subunit TRM6 (Trmt6) from Mus musculus (Mouse).